A 265-amino-acid chain; its full sequence is Palmitoyltransferase ZDHHC21 (265 aa).

The Cytoplasmic segment spans residues 1–16 (MGLRIHFVVDPHGWCC). Residues 17 to 37 (MGLIVFVWLYNFFLIPKIVLF) form a helical membrane-spanning segment. Residues 38-44 (PHYEEGH) lie on the Extracellular side of the membrane. Residues 45–65 (IPGILIIIFYGIAMFCLVALV) form a helical membrane-spanning segment. At 66 to 133 (RASITDPGRL…NNCVGEDNHW (68 aa)) the chain is on the cytoplasmic side. Residues 90–140 (ELCNKCNLMRPKRSHHCSRCGHCVRRMDHHCPWINNCVGEDNHWLFLQLCF) enclose the DHHC domain. Catalysis depends on cysteine 120, which acts as the S-palmitoyl cysteine intermediate. Residues 134–154 (LFLQLCFYTELLTCYALMFSF) traverse the membrane as a helical segment. Residues 155 to 185 (CHYYYFLPLKKRNLDLFVVRHELAIMRLAAF) lie on the Extracellular side of the membrane. Residues 186 to 206 (MGITMLVGITGLFYTQLIGII) form a helical membrane-spanning segment. Residues 207–265 (TDTTSIEKMSNCCEEISRPRKPWQQTFSEVFGTRWKILWFIPFRRRQPLRVPYHFANHV) are Cytoplasmic-facing.

Belongs to the DHHC palmitoyltransferase family.

The protein resides in the golgi apparatus membrane. The protein localises to the golgi apparatus. It is found in the cis-Golgi network membrane. It localises to the cell membrane. The catalysed reaction is L-cysteinyl-[protein] + hexadecanoyl-CoA = S-hexadecanoyl-L-cysteinyl-[protein] + CoA. Palmitoyltransferase that catalyzes the addition of palmitate onto various protein substrates. Palmitoylates sex steroid hormone receptors, including ESR1, PGR and AR, thereby regulating their targeting to the plasma membrane. This affects rapid intracellular signaling by sex hormones via ERK and AKT kinases and the generation of cAMP, but does not affect that mediated by their nuclear receptor. Palmitoylates FYN, regulates its localization in hair follicles and plays a key role in epidermal homeostasis and hair follicle differentiation. Through the palmitoylation of PLCB1 and the regulation of PLCB1 downstream signaling may indirectly regulate the function of the endothelial barrier and the adhesion of leukocytes to the endothelium. Also has a palmitoyltransferase activity toward ADRA1D, positively regulating its activity and expression and may thereby play a role in vascular contraction. May also palmitoylate eNOS and LCK. The chain is Palmitoyltransferase ZDHHC21 from Bos taurus (Bovine).